We begin with the raw amino-acid sequence, 329 residues long: GTPase Obg (329 aa).

An Obg domain is found at 1–159 (MQFIDQARIT…WFLQLELKLL (159 aa)). Residues 160–328 (AEVGIIGLPN…LLAQVWKELG (169 aa)) form the OBG-type G domain. Residues 166–173 (GLPNAGKS), 191–195 (FTTLV), 213–216 (DIPG), 280–283 (NKQE), and 309–311 (SAA) contribute to the ATP site. Mg(2+)-binding residues include S173 and T193.

Belongs to the TRAFAC class OBG-HflX-like GTPase superfamily. OBG GTPase family. As to quaternary structure, monomer. The cofactor is Mg(2+).

The protein localises to the cytoplasm. An essential GTPase which binds GTP, GDP and possibly (p)ppGpp with moderate affinity, with high nucleotide exchange rates and a fairly low GTP hydrolysis rate. Plays a role in control of the cell cycle, stress response, ribosome biogenesis and in those bacteria that undergo differentiation, in morphogenesis control. In Prochlorococcus marinus (strain MIT 9313), this protein is GTPase Obg.